Here is a 161-residue protein sequence, read N- to C-terminus: S-ribosylhomocysteine lyase (161 aa).

H57, H61, and C124 together coordinate Fe cation.

It belongs to the LuxS family. Homodimer. Fe cation is required as a cofactor.

The catalysed reaction is S-(5-deoxy-D-ribos-5-yl)-L-homocysteine = (S)-4,5-dihydroxypentane-2,3-dione + L-homocysteine. Involved in the synthesis of autoinducer 2 (AI-2) which is secreted by bacteria and is used to communicate both the cell density and the metabolic potential of the environment. The regulation of gene expression in response to changes in cell density is called quorum sensing. Catalyzes the transformation of S-ribosylhomocysteine (RHC) to homocysteine (HC) and 4,5-dihydroxy-2,3-pentadione (DPD). The protein is S-ribosylhomocysteine lyase of Macrococcus caseolyticus (strain JCSC5402) (Macrococcoides caseolyticum).